The chain runs to 254 residues: NH(3)-dependent NAD(+) synthetase (254 aa).

ATP is bound at residue 32 to 39; sequence GISGGIDS. D38 is a binding site for Mg(2+). R113 serves as a coordination point for deamido-NAD(+). ATP is bound at residue T133. E138 is a binding site for Mg(2+). The deamido-NAD(+) site is built by K146 and D153. ATP contacts are provided by K162 and T184. 244–245 serves as a coordination point for deamido-NAD(+); the sequence is HK.

This sequence belongs to the NAD synthetase family. Homodimer.

The catalysed reaction is deamido-NAD(+) + NH4(+) + ATP = AMP + diphosphate + NAD(+) + H(+). It participates in cofactor biosynthesis; NAD(+) biosynthesis; NAD(+) from deamido-NAD(+) (ammonia route): step 1/1. Catalyzes the ATP-dependent amidation of deamido-NAD to form NAD. Uses ammonia as a nitrogen source. This is NH(3)-dependent NAD(+) synthetase from Thermococcus kodakarensis (strain ATCC BAA-918 / JCM 12380 / KOD1) (Pyrococcus kodakaraensis (strain KOD1)).